A 549-amino-acid chain; its full sequence is Cytoplasmic trehalase (549 aa).

Substrate-binding positions include Arg-168, Trp-175–Asp-176, Asn-212, Arg-221–Gln-223, Arg-292–Glu-294, and Gly-324. Active-site proton donor/acceptor residues include Asp-326 and Glu-509. Substrate is bound at residue Glu-525.

The protein belongs to the glycosyl hydrolase 37 family. Monomer.

The protein localises to the cytoplasm. It catalyses the reaction alpha,alpha-trehalose + H2O = alpha-D-glucose + beta-D-glucose. Its pathway is glycan degradation; trehalose degradation; D-glucose from alpha,alpha-trehalose: step 1/1. In terms of biological role, hydrolyzes trehalose to glucose. Could be involved, in cells returning to low osmolarity conditions, in the utilization of the accumulated cytoplasmic trehalose, which was synthesized in response to high osmolarity. This Salmonella arizonae (strain ATCC BAA-731 / CDC346-86 / RSK2980) protein is Cytoplasmic trehalase.